Consider the following 591-residue polypeptide: Mono(ADP-ribosyl)transferase SpvB (591 aa).

The TR mART core domain maps to 373 to 576; sequence PMMGGNSSRP…LRLSDDATAD (204 aa). Residues Arg-471, Ser-501, and Glu-538 contribute to the active site.

It belongs to the SpvB family.

The protein resides in the secreted. The catalysed reaction is L-arginyl-[protein] + NAD(+) = N(omega)-(ADP-D-ribosyl)-L-arginyl-[protein] + nicotinamide + H(+). Its function is as follows. Mono-ADP-ribosylates eukaryotic muscle and non-muscle actin on 'Arg-177'. ADP-ribosylation prevents the polymerization of G-actin to F-actin, causing actin filament depolymerization, destruction of the cytoskeleton and cytotoxicity. Does not possess NAD(+)-glycohydrolase activity, unlike most mART enzymes. The sequence is that of Mono(ADP-ribosyl)transferase SpvB (spvB) from Salmonella typhimurium (strain 14028s / SGSC 2262).